Consider the following 517-residue polypeptide: Crotonobetaine/carnitine--CoA ligase (517 aa).

This sequence belongs to the ATP-dependent AMP-binding enzyme family.

It catalyses the reaction 4-(trimethylamino)butanoate + ATP + CoA = 4-(trimethylamino)butanoyl-CoA + AMP + diphosphate. It carries out the reaction crotonobetaine + ATP + CoA = crotonobetainyl-CoA + AMP + diphosphate. The catalysed reaction is (R)-carnitine + ATP + CoA = (R)-carnitinyl-CoA + AMP + diphosphate. It functions in the pathway amine and polyamine metabolism; carnitine metabolism. Catalyzes the transfer of CoA to carnitine, generating the initial carnitinyl-CoA needed for the CaiB reaction cycle. Also has activity toward crotonobetaine and gamma-butyrobetaine. The sequence is that of Crotonobetaine/carnitine--CoA ligase from Shigella sonnei (strain Ss046).